The primary structure comprises 502 residues: Glutamate decarboxylase 1 (502 aa).

The residue at position 8 (Ser-8) is a Phosphoserine. Position 277 is an N6-(pyridoxal phosphate)lysine (Lys-277). Residues 469-502 form a calmodulin-binding region; the sequence is LMVTVKKSDIDKQRDIITGWKKFVADRKKTSGIC.

The protein belongs to the group II decarboxylase family. Homohexamer. Interacts with calmodulin with a 1:3 stoichiometry. The cofactor is pyridoxal 5'-phosphate. As to expression, expressed in roots. Detected at low levels in shoots of young seedlings. Not detected in the root tips or in the central vascular bundle in the elongating region of mature roots.

The catalysed reaction is L-glutamate + H(+) = 4-aminobutanoate + CO2. With respect to regulation, up-regulated by calmodulin binding at physiological pH. In terms of biological role, catalyzes the conversion of glutamate to 4-aminobutanoate (GABA). The calmodulin-binding is calcium-dependent and it is proposed to directly or indirectly form a calcium regulated control of GABA biosynthesis. In Arabidopsis thaliana (Mouse-ear cress), this protein is Glutamate decarboxylase 1 (GAD1).